A 259-amino-acid chain; its full sequence is Ubiquinone/menaquinone biosynthesis C-methyltransferase UbiE (259 aa).

Residues T82, D103, and 131–132 each bind S-adenosyl-L-methionine; that span reads NA.

It belongs to the class I-like SAM-binding methyltransferase superfamily. MenG/UbiE family.

It carries out the reaction a 2-demethylmenaquinol + S-adenosyl-L-methionine = a menaquinol + S-adenosyl-L-homocysteine + H(+). The enzyme catalyses a 2-methoxy-6-(all-trans-polyprenyl)benzene-1,4-diol + S-adenosyl-L-methionine = a 5-methoxy-2-methyl-3-(all-trans-polyprenyl)benzene-1,4-diol + S-adenosyl-L-homocysteine + H(+). It functions in the pathway quinol/quinone metabolism; menaquinone biosynthesis; menaquinol from 1,4-dihydroxy-2-naphthoate: step 2/2. It participates in cofactor biosynthesis; ubiquinone biosynthesis. Functionally, methyltransferase required for the conversion of demethylmenaquinol (DMKH2) to menaquinol (MKH2) and the conversion of 2-polyprenyl-6-methoxy-1,4-benzoquinol (DDMQH2) to 2-polyprenyl-3-methyl-6-methoxy-1,4-benzoquinol (DMQH2). In Agrobacterium fabrum (strain C58 / ATCC 33970) (Agrobacterium tumefaciens (strain C58)), this protein is Ubiquinone/menaquinone biosynthesis C-methyltransferase UbiE.